A 344-amino-acid chain; its full sequence is Anthranilate phosphoribosyltransferase (344 aa).

5-phospho-alpha-D-ribose 1-diphosphate is bound by residues Gly-85, 88–89, Thr-93, 95–98, 113–121, and Ser-125; these read GD, NIST, and KHGGRSVSS. An anthranilate-binding site is contributed by Gly-85. Position 97 (Ser-97) interacts with Mg(2+). Arg-171 is a binding site for anthranilate. Mg(2+)-binding residues include Asp-230 and Glu-231.

It belongs to the anthranilate phosphoribosyltransferase family. As to quaternary structure, homodimer. Mg(2+) is required as a cofactor.

The catalysed reaction is N-(5-phospho-beta-D-ribosyl)anthranilate + diphosphate = 5-phospho-alpha-D-ribose 1-diphosphate + anthranilate. The protein operates within amino-acid biosynthesis; L-tryptophan biosynthesis; L-tryptophan from chorismate: step 2/5. Its function is as follows. Catalyzes the transfer of the phosphoribosyl group of 5-phosphorylribose-1-pyrophosphate (PRPP) to anthranilate to yield N-(5'-phosphoribosyl)-anthranilate (PRA). The sequence is that of Anthranilate phosphoribosyltransferase from Acidovorax ebreus (strain TPSY) (Diaphorobacter sp. (strain TPSY)).